The following is a 127-amino-acid chain: Fluoride-specific ion channel FluC (127 aa).

4 helical membrane-spanning segments follow: residues 7–27 (VYVA…VAWV), 38–58 (GTLA…VYVV), 70–90 (LIMV…LEAW), and 102–122 (LAYI…GIAL). Positions 77 and 80 each coordinate Na(+).

Belongs to the fluoride channel Fluc/FEX (TC 1.A.43) family.

The protein resides in the cell inner membrane. The enzyme catalyses fluoride(in) = fluoride(out). With respect to regulation, na(+) is not transported, but it plays an essential structural role and its presence is essential for fluoride channel function. Its function is as follows. Fluoride-specific ion channel. Important for reducing fluoride concentration in the cell, thus reducing its toxicity. This is Fluoride-specific ion channel FluC from Hahella chejuensis (strain KCTC 2396).